A 206-amino-acid chain; its full sequence is Holliday junction branch migration complex subunit RuvA (206 aa).

Residues 1 to 64 (MIAKLTGLLD…EDNIQLFGFA (64 aa)) form a domain I region. The tract at residues 65–143 (DTEERDWFRL…SFGAPAPAAA (79 aa)) is domain II. The interval 144-154 (TAGKGGAAPAG) is flexible linker. The domain III stretch occupies residues 154-206 (GPAGAVADAVSALVNLGYRRVEAFTAVNAVAQRLGPEAGVSDLIRAGLKELSP).

The protein belongs to the RuvA family. As to quaternary structure, homotetramer. Forms an RuvA(8)-RuvB(12)-Holliday junction (HJ) complex. HJ DNA is sandwiched between 2 RuvA tetramers; dsDNA enters through RuvA and exits via RuvB. An RuvB hexamer assembles on each DNA strand where it exits the tetramer. Each RuvB hexamer is contacted by two RuvA subunits (via domain III) on 2 adjacent RuvB subunits; this complex drives branch migration. In the full resolvosome a probable DNA-RuvA(4)-RuvB(12)-RuvC(2) complex forms which resolves the HJ.

It is found in the cytoplasm. Its function is as follows. The RuvA-RuvB-RuvC complex processes Holliday junction (HJ) DNA during genetic recombination and DNA repair, while the RuvA-RuvB complex plays an important role in the rescue of blocked DNA replication forks via replication fork reversal (RFR). RuvA specifically binds to HJ cruciform DNA, conferring on it an open structure. The RuvB hexamer acts as an ATP-dependent pump, pulling dsDNA into and through the RuvAB complex. HJ branch migration allows RuvC to scan DNA until it finds its consensus sequence, where it cleaves and resolves the cruciform DNA. This is Holliday junction branch migration complex subunit RuvA from Rhodospirillum centenum (strain ATCC 51521 / SW).